The chain runs to 270 residues: Neurotrophic factor BDNF precursor form (270 aa).

The N-terminal stretch at 1–18 (MTILFVTMVISYFSCMRA) is a signal peptide. Residues 19-151 (APMREIPGVQ…AANMSMRVRR (133 aa)) constitute a propeptide that is removed on maturation. Asn144 is a glycosylation site (N-linked (GlcNAc...) asparagine). Disulfide bonds link Cys164–Cys231, Cys209–Cys260, and Cys219–Cys262.

It belongs to the NGF-beta family.

Its subcellular location is the secreted. Promotes the survival of neuronal populations that are all located either in the central nervous system or directly connected to it. This Cyprinus carpio (Common carp) protein is Neurotrophic factor BDNF precursor form (bdnf).